Reading from the N-terminus, the 304-residue chain is Type II methyltransferase M.HindV (304 aa).

One can recognise an SAM-dependent MTase C5-type domain in the interval 1–299 (MKCVDLFSGC…SAIINFEKEP (299 aa)). Residue Cys-75 is part of the active site.

It belongs to the class I-like SAM-binding methyltransferase superfamily. C5-methyltransferase family.

It carries out the reaction a 2'-deoxycytidine in DNA + S-adenosyl-L-methionine = a 5-methyl-2'-deoxycytidine in DNA + S-adenosyl-L-homocysteine + H(+). A methylase, recognizes the double-stranded sequence 5'-GRCGYC-3', methylates C-? on both strands, and protects the DNA from cleavage by the HindV endonuclease. In Haemophilus influenzae (strain ATCC 51907 / DSM 11121 / KW20 / Rd), this protein is Type II methyltransferase M.HindV (hindVM).